Reading from the N-terminus, the 514-residue chain is MNLQEEIKKRRTFAIISHPDAGKTTITEQLLYFGGEIREAGTVKGKKTGNFAKSDWMDIEKQRGISVTSSVMQFDYAGKRVNILDTPGHEDFSEDTYRTLMAVDAAVMVVDSAKGIEAQTKKLFEVVKHRGIPIFTFINKLDRDGREPLDLLEELEEVLGIASYPMNWPIGMGRSFEGLYDLYNQRLELYKGDERFASIEDGDKLFANNPFYEQAKEDIELLTEAGNEFSEEAILKGELTPVFFGSALTNFGVQTFLDSFLAFAPEPHGHKTTDDKVIDPLDKDFSGFVFKIQANMDPRHRDRIAFVRIVSGEFERGMSVNLARTGKSVKLSNVTQFMAESRENVENAVAGDIIGVYDTGTYQVGDTLTVGKNKFEFEPLPTFTPELFMKVSAKNVMKQKSFHKGIEQLVQEGAIQLYTNYQTGEYMLGAVGQLQFEVFKHRMENEYNAEVIMTPMGKKTVRWIKEEDLDERMSSSRNILAKDRFNKPVFLFENDFSLHWFADKYPDIVLEEKM.

The region spanning 8–268 (KKRRTFAIIS…SFLAFAPEPH (261 aa)) is the tr-type G domain. GTP contacts are provided by residues 17-24 (SHPDAGKT), 85-89 (DTPGH), and 139-142 (NKLD).

The protein belongs to the TRAFAC class translation factor GTPase superfamily. Classic translation factor GTPase family. PrfC subfamily.

Its subcellular location is the cytoplasm. Functionally, increases the formation of ribosomal termination complexes and stimulates activities of RF-1 and RF-2. It binds guanine nucleotides and has strong preference for UGA stop codons. It may interact directly with the ribosome. The stimulation of RF-1 and RF-2 is significantly reduced by GTP and GDP, but not by GMP. The polypeptide is Peptide chain release factor 3 (Streptococcus mutans serotype c (strain ATCC 700610 / UA159)).